We begin with the raw amino-acid sequence, 255 residues long: Adenosylcobinamide-GDP ribazoletransferase (255 aa).

6 consecutive transmembrane segments (helical) span residues 24-44 (LIAY…SLYV), 45-65 (AIYG…IYIV), 98-118 (VGAG…ISLS), 122-142 (LYIG…MMMI), 164-184 (KHDS…ALLS), and 187-207 (SIMI…MAVI).

The protein belongs to the CobS family. Requires Mg(2+) as cofactor.

It is found in the cell membrane. The catalysed reaction is alpha-ribazole + adenosylcob(III)inamide-GDP = adenosylcob(III)alamin + GMP + H(+). It catalyses the reaction alpha-ribazole 5'-phosphate + adenosylcob(III)inamide-GDP = adenosylcob(III)alamin 5'-phosphate + GMP + H(+). It participates in cofactor biosynthesis; adenosylcobalamin biosynthesis; adenosylcobalamin from cob(II)yrinate a,c-diamide: step 7/7. Its function is as follows. Joins adenosylcobinamide-GDP and alpha-ribazole to generate adenosylcobalamin (Ado-cobalamin). Also synthesizes adenosylcobalamin 5'-phosphate from adenosylcobinamide-GDP and alpha-ribazole 5'-phosphate. The sequence is that of Adenosylcobinamide-GDP ribazoletransferase from Thermoplasma acidophilum (strain ATCC 25905 / DSM 1728 / JCM 9062 / NBRC 15155 / AMRC-C165).